A 277-amino-acid chain; its full sequence is Sulfate transport system permease protein CysT (277 aa).

7 consecutive transmembrane segments (helical) span residues 17 to 37, 64 to 84, 99 to 119, 136 to 156, 188 to 205, 215 to 235, and 243 to 263; these read LGTS…ALVM, LLAA…MAWI, LMDL…ASLF, VTYT…PFVV, VVLP…ALSF, VIFI…MIFV, and PAAS…LFSI. Positions 60 to 263 constitute an ABC transmembrane type-1 domain; that stretch reads YKVTLLAAFV…AASLLLLFSI (204 aa).

This sequence belongs to the binding-protein-dependent transport system permease family. CysTW subfamily. The complex is composed of two ATP-binding proteins (CysA), two transmembrane proteins (CysT and CysW) and a solute-binding protein (CysP).

The protein resides in the cell inner membrane. Functionally, part of the ABC transporter complex CysAWTP (TC 3.A.1.6.1) involved in sulfate/thiosulfate import. Probably responsible for the translocation of the substrate across the membrane. The chain is Sulfate transport system permease protein CysT (cysU) from Salmonella typhimurium (strain LT2 / SGSC1412 / ATCC 700720).